Consider the following 270-residue polypeptide: MKLVVVGVSGRMGQALVRIICETQGAVLHAAVGRPGSASIGRDAGDLAGVGPLGVPVTDDALAAFVNADGVIDFTRPETSVEFSALAAQARIVHIIGTTGCSPADEARFEAAARHARIVKSGNMSLGVNLLSVLVAQAAKALEASGWDIEVLEMHHKHKVDAPSGTALLLGEAAAKGRGIDLTEKAVKVRDGHTGPREPGSIGFATLRGGSVIGEHSVLLAGEGEIVTLSHSAGDRSIFARGAVKAALWAQDKKPGLYSMLDVLGLSSPH.

Residue 7 to 12 (GVSGRM) coordinates NAD(+). Arg34 provides a ligand contact to NADP(+). Residues 97–99 (GTT) and 121–124 (SGNM) contribute to the NAD(+) site. His155 functions as the Proton donor/acceptor in the catalytic mechanism. His156 is a binding site for (S)-2,3,4,5-tetrahydrodipicolinate. Residue Lys159 is the Proton donor of the active site. 165–166 (GT) lines the (S)-2,3,4,5-tetrahydrodipicolinate pocket.

Belongs to the DapB family.

Its subcellular location is the cytoplasm. It carries out the reaction (S)-2,3,4,5-tetrahydrodipicolinate + NAD(+) + H2O = (2S,4S)-4-hydroxy-2,3,4,5-tetrahydrodipicolinate + NADH + H(+). The catalysed reaction is (S)-2,3,4,5-tetrahydrodipicolinate + NADP(+) + H2O = (2S,4S)-4-hydroxy-2,3,4,5-tetrahydrodipicolinate + NADPH + H(+). It participates in amino-acid biosynthesis; L-lysine biosynthesis via DAP pathway; (S)-tetrahydrodipicolinate from L-aspartate: step 4/4. Functionally, catalyzes the conversion of 4-hydroxy-tetrahydrodipicolinate (HTPA) to tetrahydrodipicolinate. The protein is 4-hydroxy-tetrahydrodipicolinate reductase of Allorhizobium ampelinum (strain ATCC BAA-846 / DSM 112012 / S4) (Agrobacterium vitis (strain S4)).